We begin with the raw amino-acid sequence, 89 residues long: Barrier-to-autointegration factor (89 aa).

M1 carries the post-translational modification N-acetylmethionine. T2 is subject to N-acetylthreonine; in Barrier-to-autointegration factor, N-terminally processed. Phosphothreonine; by VRK1 and VRK2 occurs at positions 2 and 3. S4 carries the post-translational modification Phosphoserine; by VRK1 and VRK2. One can recognise a HhH domain in the interval 20–35 (VGSLAGIGDVLSKRLE).

The protein belongs to the BAF family. Homodimer. Heterodimerizes with BANF2. Interacts with ANKLE2/LEM4, leading to decreased phosphorylation by VRK1 and promoting dephosphorylation by protein phosphatase 2A (PP2A). Binds non-specifically to double-stranded DNA, and is found as a hexamer or dodecamer upon DNA binding. Binds to LEM domain-containing nuclear proteins such as LEMD3/MAN1, TMPO/LAP2 and EMD (emerin). Interacts with ANKLE1 (via LEM domain); the interaction may favor BANF1 dimerization. Interacts with CRX and LMNA (lamin-A). Binds linker histone H1.1 and core histones H3. Interacts with LEMD2 (via LEM domain). Interacts with PARP1; interaction takes place in response to oxidative DNA damage. Post-translationally, ser-4 is the major site of phosphorylation as compared to Thr-2 and Thr-3. Phosphorylation on Thr-2; Thr-3 and Ser-4 disrupts its ability to bind DNA and reduces its ability to bind LEM domain-containing proteins. Non phosphorylated BAF seems to enhance binding between EMD and LMNA. Dephosphorylated by protein phosphatase 2A (PP2A) following interaction with ANKLE2/LEM4 during mitotic exit, leading to mitotic nuclear envelope reassembly.

The protein resides in the nucleus. It localises to the chromosome. It is found in the nucleus envelope. Its subcellular location is the cytoplasm. Non-specific DNA-binding protein that plays key roles in mitotic nuclear reassembly, chromatin organization, DNA damage response, gene expression and intrinsic immunity against foreign DNA. Contains two non-specific double-stranded DNA (dsDNA)-binding sites which promote DNA cross-bridging. Plays a key role in nuclear membrane reformation at the end of mitosis by driving formation of a single nucleus in a spindle-independent manner. Transiently cross-bridges anaphase chromosomes via its ability to bridge distant DNA sites, leading to the formation of a dense chromatin network at the chromosome ensemble surface that limits membranes to the surface. Also acts as a negative regulator of innate immune activation by restricting CGAS activity toward self-DNA upon acute loss of nuclear membrane integrity. Outcompetes CGAS for DNA-binding, thereby preventing CGAS activation and subsequent damaging autoinflammatory responses. Also involved in DNA damage response: interacts with PARP1 in response to oxidative stress, thereby inhibiting the ADP-ribosyltransferase activity of PARP1. Involved in the recognition of exogenous dsDNA in the cytosol: associates with exogenous dsDNA immediately after its appearance in the cytosol at endosome breakdown and is required to avoid autophagy. This chain is Barrier-to-autointegration factor, found in Mus musculus (Mouse).